The sequence spans 340 residues: Uroporphyrinogen decarboxylase (340 aa).

Residues 21-25, D71, Y148, S203, and H316 each bind substrate; that span reads RQAGR.

This sequence belongs to the uroporphyrinogen decarboxylase family. As to quaternary structure, homodimer.

It is found in the cytoplasm. The catalysed reaction is uroporphyrinogen III + 4 H(+) = coproporphyrinogen III + 4 CO2. Its pathway is porphyrin-containing compound metabolism; protoporphyrin-IX biosynthesis; coproporphyrinogen-III from 5-aminolevulinate: step 4/4. Functionally, catalyzes the decarboxylation of four acetate groups of uroporphyrinogen-III to yield coproporphyrinogen-III. This chain is Uroporphyrinogen decarboxylase, found in Campylobacter hominis (strain ATCC BAA-381 / DSM 21671 / CCUG 45161 / LMG 19568 / NCTC 13146 / CH001A).